The chain runs to 387 residues: Succinate--CoA ligase [ADP-forming] subunit beta (387 aa).

Residues lysine 46, 53 to 55, glutamate 99, alanine 102, and glutamate 107 contribute to the ATP site; that span reads GRG. Residues asparagine 199 and aspartate 213 each coordinate Mg(2+). Residues asparagine 264 and 321–323 contribute to the substrate site; that span reads GIV.

It belongs to the succinate/malate CoA ligase beta subunit family. As to quaternary structure, heterotetramer of two alpha and two beta subunits. Mg(2+) serves as cofactor.

The catalysed reaction is succinate + ATP + CoA = succinyl-CoA + ADP + phosphate. The enzyme catalyses GTP + succinate + CoA = succinyl-CoA + GDP + phosphate. It participates in carbohydrate metabolism; tricarboxylic acid cycle; succinate from succinyl-CoA (ligase route): step 1/1. Its function is as follows. Succinyl-CoA synthetase functions in the citric acid cycle (TCA), coupling the hydrolysis of succinyl-CoA to the synthesis of either ATP or GTP and thus represents the only step of substrate-level phosphorylation in the TCA. The beta subunit provides nucleotide specificity of the enzyme and binds the substrate succinate, while the binding sites for coenzyme A and phosphate are found in the alpha subunit. This Campylobacter jejuni subsp. doylei (strain ATCC BAA-1458 / RM4099 / 269.97) protein is Succinate--CoA ligase [ADP-forming] subunit beta.